We begin with the raw amino-acid sequence, 184 residues long: MPVDAWIREEIEIPEGVEVTVEGNTVKVKGPKGELQRELKYPGVQIFTEDGKVVIYKEFPRKKDVAIVRTFKAHINNMIKGVTEGFKYRLKVVYSHFPMTVKVQGDEVVIENFLGEKNPRRAKILPGVTVKVKGSEIEVEGIDKEAVGQTAANIEQATRITKWDRRVFQDGIYIVEKAGKPIKF.

This sequence belongs to the universal ribosomal protein uL6 family. In terms of assembly, part of the 50S ribosomal subunit.

Its function is as follows. This protein binds to the 23S rRNA, and is important in its secondary structure. It is located near the subunit interface in the base of the L7/L12 stalk, and near the tRNA binding site of the peptidyltransferase center. The polypeptide is Large ribosomal subunit protein uL6 (Thermococcus kodakarensis (strain ATCC BAA-918 / JCM 12380 / KOD1) (Pyrococcus kodakaraensis (strain KOD1))).